Reading from the N-terminus, the 1828-residue chain is MAASELYTKFARVWIPDPEEVWKSAELLKDYKPGDKVLLLHLEEGKDLEYRLDPKTSELPHLRNPDILVGENDLTALSYLHEPAVLHNLRVRFIDSKLIYTYCGIVLVAINPYEQLPIYGEDIINAYSGQNMGDMDPHIFAVAEEAYKQMARDERNQSIIVSGESGAGKTVSAKYAMRYFATVSGSASEANVEEKVLASNPIMESIGNAKTTRNDNSSRFGKYIEIGFDKRYRIIGANMRTYLLEKSRVVFQAEEERNYHIFYQLCASAKLPEFKMLRLGNADSFHYTKQGGSPMIEGVDDAKEMAHTRQACTLLGISESYQMGIFRILAGILHLGNVGFASRDSDSCTIPPKHEPLIIFCDLMGVDYEEMCHWLCHRKLATATETYIKPISKLQATNARDALAKHIYAKLFNWIVGHVNQALHSAVKQHSFIGVLDIYGFETFEINSFEQFCINYANEKLQQQFNMHVFKLEQEEYMKEQIPWTLIDFYDNQPCINLIESKLGILDLLDEECKMPKGTDDTWAQKLYNTHLNKCALFEKPRMSNKAFIIKHFADKVEYQCEGFLEKNKDTVFEEQIKVLKSSKFKMLPELFQDDEKAISPTSATSSGRTPLTRVPVKPTKGRPGQTAKEHKKTVGLQFRNSLHLLMETLNATTPHYVRCIKPNDFKFPFTFDEKRAVQQLRACGVLETIRISAAGFPSRWTYQEFFSRYRVLMKQKDVLGDRKQTCQNVLEKLILDKDKYQFGKTKIFFRAGQVAYLEKLRADKLRAACIRIQKTIRGWLLRKRYLCMQRAAITVQRYVRGYQARCYAKFLRRTKAATTIQKYWRMYVVRRKYKIRRAATIVLQSYLRGYLARNRYRKILREHKAVIIQKRVRGWLARTHYKRTMKAIIYLQCCFRRMMAKRELKKLKIEARSVERYKKLHIGMENKIMQLQRKVDEQNKDYKCLMEKLTNLEGVYNSETEKLRNDVERLQLSEEEAKVATGRVLSLQEEIAKLRKDLEQTRSEKKSIEERADKYKQETEQLVSNLKEENTLLKQEKETLNHLMVEQAKEMTETMERKLVEETKQLELDLNDERLRYQNLLNEFSRLEERYDDLKEEMTLMLNVPKPGHKRTDSTHSSNESEYTFSSEFAETEDIAPRTEEPTEKKVPLDMSLFLKLQKRVTELGQEKQLMQDELDRKEEQVLRSKAKGGERPQIRGAELGYESLKRQELESENKKLKNELNELRKALSEKSAPEVNAPGAPAYRVLMEQLTAVSEELDVRKEEVLILRSQLVSQKEAIQPKDDKNTMTDSTILLEDVQKMKDKGEIAQAYIGLKETNRLLESQLQSQKRSHENEAEALRGEIQSLKEENNRQQQLLAQNLQLPPEARIEASLQHEITRLTNENLDLMEQLEKQDKTVRKLKKQLKVFAKKIGELEVGQMENISPGQIIDEPIRPVNIPRKGKDFQGMLEYKREDEQKLVKNLILELKPRGVAVNLISGLPAYILFMCVRHADYLDDDQKVRSLLTSTINSIKKVLKKRGDDFETVSFWLSNTCRFLHCLKQYSGEEGFMKHNTSRQNEHCLTNFDLAEYRQVLSDLAIQIYQQLVRVLENILQPMIVSGMLEHETIQGVSGVKPTGLRKRTSSIADEGTYTLDSILRQLNSFHSVMCQHGMDPELIKQVVKQMFYIVGAITLNNLLLRKDMCSWSKGMQIRYNVSQLEEWLRDKNLMNSGAKETLEPLIQAAQLLQVKKKTDDDAEAICSMCNALTTAQIVKVLNLYTPVNEFEERVSVSFIRTIQVRLRDRKDSPQLLMDAKHIFPVTFPFNPSSLALETIQIPASLGLGFIARV.

Ala-2 is modified (N-acetylalanine). Residues 8 to 60 (TKFARVWIPDPEEVWKSAELLKDYKPGDKVLLLHLEEGKDLEYRLDPKTSELP) form the Myosin N-terminal SH3-like domain. One can recognise a Myosin motor domain in the interval 69 to 763 (VGENDLTALS…QVAYLEKLRA (695 aa)). ATP is bound at residue 163–170 (GESGAGKT). Residues 599–633 (ISPTSATSSGRTPLTRVPVKPTKGRPGQTAKEHKK) form a disordered region. Residue Ser-600 is modified to Phosphoserine. Residues 600–610 (SPTSATSSGRT) show a composition bias toward polar residues. Residues 643 to 665 (LHLLMETLNATTPHYVRCIKPND) are actin-binding. 6 IQ domains span residues 766 to 788 (LRAA…RYLC), 789 to 813 (MQRA…KFLR), 814 to 836 (RTKA…KYKI), 837 to 861 (RRAA…RKIL), 862 to 884 (REHK…HYKR), and 885 to 914 (TMKA…EARS). Coiled coils occupy residues 914–1239 (SVER…EVNA) and 1314–1418 (GLKE…ELEV). Residue Thr-1032 is modified to Phosphothreonine. The segment at 1105-1147 (VPKPGHKRTDSTHSSNESEYTFSSEFAETEDIAPRTEEPTEKK) is disordered. Residues 1116–1130 (THSSNESEYTFSSEF) are compositionally biased toward polar residues. Positions 1136–1147 (IAPRTEEPTEKK) are enriched in basic and acidic residues. 2 positions are modified to phosphoserine: Ser-1425 and Ser-1625. One can recognise a Dilute domain in the interval 1507–1783 (TSTINSIKKV…IRTIQVRLRD (277 aa)). Thr-1733 carries the phosphothreonine modification.

The protein belongs to the TRAFAC class myosin-kinesin ATPase superfamily. Myosin family. May be a homodimer, which associates with multiple calmodulin or myosin light chains. Interacts with RIPL2, the interaction is required for its role in dendrite formation. Interacts with MLPH. Interacts with SYTL4. Interacts with MYRIP. Interacts with RAB10; mediates the transport to the plasma membrane of SLC2A4/GLUT4 storage vesicles. Interacts with FMR1; this interaction occurs in association with polyribosome.

It carries out the reaction ATP + H2O = ADP + phosphate + H(+). In terms of biological role, processive actin-based motor that can move in large steps approximating the 36-nm pseudo-repeat of the actin filament. Can hydrolyze ATP in the presence of actin, which is essential for its function as a motor protein. Involved in melanosome transport. Also mediates the transport of vesicles to the plasma membrane. May also be required for some polarization process involved in dendrite formation. This is Unconventional myosin-Va (Myo5a) from Rattus norvegicus (Rat).